The following is a 176-amino-acid chain: MADQKKVSEAAKEREIKISSSDNEIFLVPRNVIRLSNTINTLLMDLGLDDEEGTNAEPIPVQNVTASILKKVISWCNHHHSDPISTEDSDNREKRTDDIGSWDVEFLKVDQGTLFELILAANYLDIKGLLDVTCKTVANMIKGKSPEEIRRTFNIKNDFTPEEEEQIRKENAWCED.

The protein belongs to the SKP1 family. In terms of assembly, probable component of the SCF(sel-10) E3 ubiquitin-protein ligase complex containing F-box domain-containing protein sel-10 as the substrate recognition component. Interacts with cul-1. May interact with the F-box protein mec-15. Interacts with dre-1. Interacts with syg-1. Interacts with sel-10. As to expression, ubiquitously expressed in the adult.

Its function is as follows. Probable essential component of SCF (SKP1-CUL1-F-box protein) E3 ubiquitin-protein ligase complexes, which mediate the ubiquitination and subsequent proteasomal degradation of target proteins. Regulates cell proliferation during embryonic and larval development. Involved in synapse elimination in early synapse development. May negatively regulate the apoptotic activity of cep-1 in response to genotoxic stress. Plays a role in sex determination. The polypeptide is Skp1-related protein (Caenorhabditis elegans).